Here is a 279-residue protein sequence, read N- to C-terminus: MAMAAASWASSSSFTRFLRPLLSRNSSPSPISYSLHRYKSANCLFFSASSNKPPKLAVYAQARRVLSSKTKGDEIATPADLSFVVPLKIVEYPDPILRAKNKRIDNFDANLKKLVDEMFDIMYKTDGIGLSAPQVGMNVQLMVFNAAGERGEGEEIVLVNPRVSRYSRRIIPYEEGCLSFPMIHGDVKRPESVKVDAQDINGTRFEISLSALPARVFQHEFDHLQGVLFFDKMTDEVLDTIREKLVALEKKYEDRTGLPTPESINTRKIKKAAVGFGKS.

2 residues coordinate Fe cation: Cys-177 and His-219. Glu-220 is a catalytic residue. Residue His-223 coordinates Fe cation.

Belongs to the polypeptide deformylase family. Fe(2+) is required as a cofactor.

The protein resides in the plastid. It localises to the chloroplast. The catalysed reaction is N-terminal N-formyl-L-methionyl-[peptide] + H2O = N-terminal L-methionyl-[peptide] + formate. In terms of biological role, removes the formyl group from the N-terminal Met of newly synthesized proteins. The sequence is that of Peptide deformylase 1B, chloroplastic (PDF1B) from Solanum lycopersicum (Tomato).